The chain runs to 143 residues: Transcription antitermination protein NusB (143 aa).

Belongs to the NusB family.

Its function is as follows. Involved in transcription antitermination. Required for transcription of ribosomal RNA (rRNA) genes. Binds specifically to the boxA antiterminator sequence of the ribosomal RNA (rrn) operons. The polypeptide is Transcription antitermination protein NusB (Mannheimia succiniciproducens (strain KCTC 0769BP / MBEL55E)).